The primary structure comprises 846 residues: DNA mismatch repair protein MutS (846 aa).

Residue 594-601 (GPNMSGKS) participates in ATP binding.

Belongs to the DNA mismatch repair MutS family.

In terms of biological role, this protein is involved in the repair of mismatches in DNA. It is possible that it carries out the mismatch recognition step. This protein has a weak ATPase activity. The polypeptide is DNA mismatch repair protein MutS (Macrococcus caseolyticus (strain JCSC5402) (Macrococcoides caseolyticum)).